Consider the following 75-residue polypeptide: uncharacterized protein (75 aa).

It belongs to the HSBP1 family.

This is an uncharacterized protein from Schizosaccharomyces pombe (strain 972 / ATCC 24843) (Fission yeast).